The sequence spans 378 residues: Chorismate synthase (378 aa).

Residues 42–61 (IQAELDRRRPGQSPITTPRQ) are disordered. Residue arginine 49 coordinates NADP(+). FMN is bound by residues 126–128 (RAS), glycine 287, 302–306 (KPTAT), and arginine 328.

It belongs to the chorismate synthase family. Homotetramer. FMNH2 serves as cofactor.

The catalysed reaction is 5-O-(1-carboxyvinyl)-3-phosphoshikimate = chorismate + phosphate. Its pathway is metabolic intermediate biosynthesis; chorismate biosynthesis; chorismate from D-erythrose 4-phosphate and phosphoenolpyruvate: step 7/7. Functionally, catalyzes the anti-1,4-elimination of the C-3 phosphate and the C-6 proR hydrogen from 5-enolpyruvylshikimate-3-phosphate (EPSP) to yield chorismate, which is the branch point compound that serves as the starting substrate for the three terminal pathways of aromatic amino acid biosynthesis. This reaction introduces a second double bond into the aromatic ring system. In Synechococcus sp. (strain JA-2-3B'a(2-13)) (Cyanobacteria bacterium Yellowstone B-Prime), this protein is Chorismate synthase.